Consider the following 63-residue polypeptide: Sperm protamine P1 (63 aa).

Positions 1–63 (MARYRRHSRS…RYSRRGRRRY (63 aa)) are disordered.

The protein belongs to the protamine P1 family. As to expression, testis.

It localises to the nucleus. The protein resides in the chromosome. Its function is as follows. Protamines substitute for histones in the chromatin of sperm during the haploid phase of spermatogenesis. They compact sperm DNA into a highly condensed, stable and inactive complex. This chain is Sperm protamine P1 (PRM1), found in Sminthopsis bindi (Kakadu dunnart).